Reading from the N-terminus, the 232-residue chain is 7-cyano-7-deazaguanine synthase (232 aa).

Position 8 to 18 (8 to 18 (FSGGQDSTTCL)) interacts with ATP. Residues Cys-189, Cys-198, Cys-201, and Cys-204 each coordinate Zn(2+).

The protein belongs to the QueC family. The cofactor is Zn(2+).

The catalysed reaction is 7-carboxy-7-deazaguanine + NH4(+) + ATP = 7-cyano-7-deazaguanine + ADP + phosphate + H2O + H(+). It participates in purine metabolism; 7-cyano-7-deazaguanine biosynthesis. Catalyzes the ATP-dependent conversion of 7-carboxy-7-deazaguanine (CDG) to 7-cyano-7-deazaguanine (preQ(0)). In Yersinia pseudotuberculosis serotype O:1b (strain IP 31758), this protein is 7-cyano-7-deazaguanine synthase.